A 443-amino-acid chain; its full sequence is Trigger factor (443 aa).

Residues 161–246 (GDKVVIDFQG…IKKIMEGKLP (86 aa)) enclose the PPIase FKBP-type domain.

It belongs to the FKBP-type PPIase family. Tig subfamily.

It localises to the cytoplasm. The catalysed reaction is [protein]-peptidylproline (omega=180) = [protein]-peptidylproline (omega=0). Its function is as follows. Involved in protein export. Acts as a chaperone by maintaining the newly synthesized protein in an open conformation. Functions as a peptidyl-prolyl cis-trans isomerase. This is Trigger factor from Legionella pneumophila subsp. pneumophila (strain Philadelphia 1 / ATCC 33152 / DSM 7513).